The sequence spans 141 residues: MAIERTLSIIKPDAVAKNVIGQILARFEGAGLKIAAARLAQLSRAEAEQFYAVHKARPFFNDLVNFMISGPVMIQVLEGEGAILKNRDLMGATDPKKAEKGTIRADFADSIDANAVHGSDAPETAAVEIAFFFPGMAVYSR.

ATP is bound by residues Lys11, Phe59, Arg87, Thr93, Arg104, and Asn114. His117 functions as the Pros-phosphohistidine intermediate in the catalytic mechanism.

Belongs to the NDK family. As to quaternary structure, homotetramer. It depends on Mg(2+) as a cofactor.

The protein resides in the cytoplasm. The enzyme catalyses a 2'-deoxyribonucleoside 5'-diphosphate + ATP = a 2'-deoxyribonucleoside 5'-triphosphate + ADP. It carries out the reaction a ribonucleoside 5'-diphosphate + ATP = a ribonucleoside 5'-triphosphate + ADP. Major role in the synthesis of nucleoside triphosphates other than ATP. The ATP gamma phosphate is transferred to the NDP beta phosphate via a ping-pong mechanism, using a phosphorylated active-site intermediate. The polypeptide is Nucleoside diphosphate kinase (Leptothrix cholodnii (strain ATCC 51168 / LMG 8142 / SP-6) (Leptothrix discophora (strain SP-6))).